Consider the following 278-residue polypeptide: uncharacterized protein (278 aa).

Residues 251-278 are disordered; sequence TLSENKKQKSSSTSPETDSDMSEFFGDN.

This is an uncharacterized protein from Aedes pseudoscutellaris reovirus (isolate France) (ApRV).